We begin with the raw amino-acid sequence, 1132 residues long: Ubiquitin carboxyl-terminal hydrolase 43 (1132 aa).

Residues 1-103 (MDPGVGNALG…GARPPGAQGL (103 aa)) form a disordered region. Positions 17–28 (RPRRRRSLRRLL) are enriched in basic residues. Composition is skewed to low complexity over residues 29–44 (NRFL…SGDS) and 63–78 (FACA…GSPG). A USP domain is found at 101–710 (QGLKNHGNTC…GAYILFYQKR (610 aa)). Residue Cys-110 is the Nucleophile of the active site. His-668 (proton acceptor) is an active-site residue. Arg-746 carries the asymmetric dimethylarginine modification. Disordered stretches follow at residues 839–891 (RRRP…TGVP), 935–1008 (TVMP…RGQG), 1024–1044 (RTVR…SDRL), and 1057–1106 (RESP…GEQI). Over residues 941 to 950 (GDEKPARPEG) the composition is skewed to basic and acidic residues. Residues 958–967 (GSSQVGSQSS) show a composition bias toward low complexity. Ser-970 carries the post-translational modification Phosphoserine. Residues 994–1006 (AAMEERAPDKDRG) show a composition bias toward basic and acidic residues.

Belongs to the peptidase C19 family.

It catalyses the reaction Thiol-dependent hydrolysis of ester, thioester, amide, peptide and isopeptide bonds formed by the C-terminal Gly of ubiquitin (a 76-residue protein attached to proteins as an intracellular targeting signal).. May recognize and hydrolyze the peptide bond at the C-terminal Gly of ubiquitin. Involved in the processing of poly-ubiquitin precursors as well as that of ubiquitinated proteins. This chain is Ubiquitin carboxyl-terminal hydrolase 43 (Usp43), found in Mus musculus (Mouse).